A 181-amino-acid polypeptide reads, in one-letter code: Ion-translocating oxidoreductase complex subunit B (181 aa).

Residues 1 to 26 form a hydrophobic region; sequence MLEAVSAVMSLGGMALFAGLGLGYAA. Residues 32–90 form the 4Fe-4S domain; sequence EADPVVEKLEALLPATNCGMCGHPGCGPYAQAITEGEAINLCTPGGKAVMESIAAMLGV. [4Fe-4S] cluster contacts are provided by C49, C52, C57, C73, C110, C113, C116, C120, C140, C143, C146, and C150. 4Fe-4S ferredoxin-type domains lie at 101 to 130 and 131 to 160; these read KVAYIDEEACIGCTACIKVCPVDAIVGANK and QSHTVIVAECTSCQLCLEPCPTDCITMQPV.

It belongs to the 4Fe4S bacterial-type ferredoxin family. RnfB subfamily. The complex is composed of six subunits: RnfA, RnfB, RnfC, RnfD, RnfE and RnfG. Requires [4Fe-4S] cluster as cofactor.

It localises to the cell inner membrane. In terms of biological role, part of a membrane-bound complex that couples electron transfer with translocation of ions across the membrane. The protein is Ion-translocating oxidoreductase complex subunit B of Magnetococcus marinus (strain ATCC BAA-1437 / JCM 17883 / MC-1).